The sequence spans 63 residues: Large ribosomal subunit protein bL35 (63 aa).

Composition is skewed to basic residues over residues 1-25 (MPKM…KHRQ) and 32-47 (LTKK…RPKK). Residues 1-55 (MPKMKSKSSAAKRFKKTANGFKHRQSFTSHILTKKSTKRKRHLRPKKQVNPSDVP) are disordered.

This sequence belongs to the bacterial ribosomal protein bL35 family.

The sequence is that of Large ribosomal subunit protein bL35 from Hahella chejuensis (strain KCTC 2396).